Reading from the N-terminus, the 483-residue chain is Wax ester synthase/diacylglycerol acyltransferase 10 (483 aa).

The Cytoplasmic segment spans residues 1 to 203; that stretch reads MTKEEVEEEP…SINAVYYAVR (203 aa). His-143 (proton acceptor) is an active-site residue. The helical transmembrane segment at 204–222 threads the bilayer; that stretch reads LIWNTIVDLLLLWATSLFF. At 223–483 the chain is on the lumenal side; sequence KDTETPISEG…MKDTLSGKSD (261 aa). N-linked (GlcNAc...) asparagine glycans are attached at residues Asn-394 and Asn-399.

In the N-terminal section; belongs to the long-chain O-acyltransferase family. Mostly expressed in roots.

It localises to the cell membrane. The protein resides in the endoplasmic reticulum membrane. The catalysed reaction is an acyl-CoA + a 1,2-diacyl-sn-glycerol = a triacyl-sn-glycerol + CoA. The enzyme catalyses a long chain fatty alcohol + a fatty acyl-CoA = a wax ester + CoA. It participates in glycerolipid metabolism; triacylglycerol biosynthesis. It functions in the pathway lipid metabolism. In terms of biological role, bifunctional wax ester synthase/diacylglycerol acyltransferase. Involved in cuticular wax biosynthesis. This is Wax ester synthase/diacylglycerol acyltransferase 10 from Arabidopsis thaliana (Mouse-ear cress).